The following is a 442-amino-acid chain: UDP-N-acetylmuramoylalanine--D-glutamate ligase (442 aa).

Belongs to the MurCDEF family.

The protein localises to the cytoplasm. The enzyme catalyses UDP-N-acetyl-alpha-D-muramoyl-L-alanine + D-glutamate + ATP = UDP-N-acetyl-alpha-D-muramoyl-L-alanyl-D-glutamate + ADP + phosphate + H(+). Its pathway is cell wall biogenesis; peptidoglycan biosynthesis. In terms of biological role, cell wall formation. Catalyzes the addition of glutamate to the nucleotide precursor UDP-N-acetylmuramoyl-L-alanine (UMA). The protein is UDP-N-acetylmuramoylalanine--D-glutamate ligase of Buchnera aphidicola subsp. Baizongia pistaciae (strain Bp).